We begin with the raw amino-acid sequence, 84 residues long: Xenoxin-1 (84 aa).

Positions 1–18 are cleaved as a signal peptide; it reads MRYAIVFFLVCVITLGEA. Disulfide bonds link Cys-21–Cys-42, Cys-35–Cys-55, Cys-61–Cys-76, and Cys-77–Cys-82.

In terms of tissue distribution, expressed by the skin dorsal glands.

The protein localises to the secreted. Lacks alpha-neurotoxic activity, has apparently no antibacterial activity, nor anti-coagulant potency. This is Xenoxin-1 (xenoxin-1) from Xenopus laevis (African clawed frog).